Reading from the N-terminus, the 430-residue chain is Tol-Pal system protein TolB (430 aa).

An N-terminal signal peptide occupies residues 1–21 (MKQALRVAFGFLMLWAAVLHA).

This sequence belongs to the TolB family. As to quaternary structure, the Tol-Pal system is composed of five core proteins: the inner membrane proteins TolA, TolQ and TolR, the periplasmic protein TolB and the outer membrane protein Pal. They form a network linking the inner and outer membranes and the peptidoglycan layer.

The protein resides in the periplasm. Its function is as follows. Part of the Tol-Pal system, which plays a role in outer membrane invagination during cell division and is important for maintaining outer membrane integrity. TolB occupies a key intermediary position in the Tol-Pal system because it communicates directly with both membrane-embedded components, Pal in the outer membrane and TolA in the inner membrane. In Salmonella typhi, this protein is Tol-Pal system protein TolB.